Reading from the N-terminus, the 416-residue chain is MYLQGFGNYHHSEAVKGALPPNQNSPQHCSLGLYAEQLSGTSFTRPRHNNLRSWLYRILPTVTQGTYYPYEFNIMQPLVDELSPNAMRWSPLYNSSQIKCDFVEGLFHIAGSPLVNAYTYYCNHSMSDKYFANNDGELLFVPYTGEIHLHTEFGKLMLSSGSIAVIPRGVKFKVEVISKEAKGYLCENSGNPLTLPQLGPIGANGLANPRHFQYPVAAFENSVGEHTIICKNQKKLWFTVCNHSPLNVVAWHGNYAPYCYDLSLFNTINTVSFDHPDPSIFTVLTSESEIPGVSNLDFVIFPPRWMVAEHTFRPPYFHRNYMNELMGLVYGEYDAKKEGFIPGGISIHNCMTPHGPDYESYEIAASQDLKPNYINSLAFMFETKDYWQVTEQAYRHPSRQIDYLNCWQGFKIEFSQ.

The Proton acceptor role is filled by H275. Fe cation-binding residues include H318 and E324. Homogentisate-binding residues include Y333 and H354. H354 is a binding site for Fe cation.

This sequence belongs to the homogentisate dioxygenase family. Hexamer; dimer of trimers. Fe cation is required as a cofactor.

It carries out the reaction homogentisate + O2 = 4-maleylacetoacetate + H(+). It participates in amino-acid degradation; L-phenylalanine degradation; acetoacetate and fumarate from L-phenylalanine: step 4/6. Involved in the catabolism of homogentisate (2,5-dihydroxyphenylacetate or 2,5-OH-PhAc), a central intermediate in the degradation of phenylalanine and tyrosine. Catalyzes the oxidative ring cleavage of the aromatic ring of homogentisate to yield maleylacetoacetate. This is Homogentisate 1,2-dioxygenase from Legionella pneumophila (strain Lens).